The chain runs to 282 residues: Lipoyl synthase (282 aa).

[4Fe-4S] cluster-binding residues include Cys-37, Cys-42, Cys-48, Cys-63, Cys-67, Cys-70, and Ser-274. The Radical SAM core domain maps to 49 to 263 (WGKGTATFMI…KTIGLEKGFS (215 aa)).

The protein belongs to the radical SAM superfamily. Lipoyl synthase family. Requires [4Fe-4S] cluster as cofactor.

It is found in the cytoplasm. It carries out the reaction [[Fe-S] cluster scaffold protein carrying a second [4Fe-4S](2+) cluster] + N(6)-octanoyl-L-lysyl-[protein] + 2 oxidized [2Fe-2S]-[ferredoxin] + 2 S-adenosyl-L-methionine + 4 H(+) = [[Fe-S] cluster scaffold protein] + N(6)-[(R)-dihydrolipoyl]-L-lysyl-[protein] + 4 Fe(3+) + 2 hydrogen sulfide + 2 5'-deoxyadenosine + 2 L-methionine + 2 reduced [2Fe-2S]-[ferredoxin]. It participates in protein modification; protein lipoylation via endogenous pathway; protein N(6)-(lipoyl)lysine from octanoyl-[acyl-carrier-protein]: step 2/2. Functionally, catalyzes the radical-mediated insertion of two sulfur atoms into the C-6 and C-8 positions of the octanoyl moiety bound to the lipoyl domains of lipoate-dependent enzymes, thereby converting the octanoylated domains into lipoylated derivatives. This chain is Lipoyl synthase, found in Bacteroides thetaiotaomicron (strain ATCC 29148 / DSM 2079 / JCM 5827 / CCUG 10774 / NCTC 10582 / VPI-5482 / E50).